A 135-amino-acid chain; its full sequence is MRKLIKLNVIVFVLLYLGELFASLSFKLISCLKTRNQYSLNGYYALFVFVNIIQKMANSFQKLASSVVLFETEINEFLVLFTDTKNKREESEPVRQVSTTQEYHQVTLDQQHYFNHKLSDYFRLFKDKTFFFEII.

This is an uncharacterized protein from Mycoplasma pneumoniae (strain ATCC 29342 / M129 / Subtype 1) (Mycoplasmoides pneumoniae).